Here is a 318-residue protein sequence, read N- to C-terminus: Acetyl-coenzyme A carboxylase carboxyl transferase subunit alpha (318 aa).

The 255-residue stretch at 38 to 292 (KLEKRLAKLE…NKTITKSLHA (255 aa)) folds into the CoA carboxyltransferase C-terminal domain.

This sequence belongs to the AccA family. In terms of assembly, acetyl-CoA carboxylase is a heterohexamer composed of biotin carboxyl carrier protein (AccB), biotin carboxylase (AccC) and two subunits each of ACCase subunit alpha (AccA) and ACCase subunit beta (AccD).

It localises to the cytoplasm. It carries out the reaction N(6)-carboxybiotinyl-L-lysyl-[protein] + acetyl-CoA = N(6)-biotinyl-L-lysyl-[protein] + malonyl-CoA. The protein operates within lipid metabolism; malonyl-CoA biosynthesis; malonyl-CoA from acetyl-CoA: step 1/1. Functionally, component of the acetyl coenzyme A carboxylase (ACC) complex. First, biotin carboxylase catalyzes the carboxylation of biotin on its carrier protein (BCCP) and then the CO(2) group is transferred by the carboxyltransferase to acetyl-CoA to form malonyl-CoA. In Listeria innocua serovar 6a (strain ATCC BAA-680 / CLIP 11262), this protein is Acetyl-coenzyme A carboxylase carboxyl transferase subunit alpha.